The primary structure comprises 74 residues: MPSNCEILCEIIIAILLPPLGVCFRKGCCTVEFLICLVLTILGYVPGIIYAIYVIVFQHREEYFDEYRRPIYSA.

The next 2 helical transmembrane spans lie at 4–24 (NCEILCEIIIAILLPPLGVCF) and 37–57 (LVLTILGYVPGIIYAIYVIVF).

This sequence belongs to the UPF0057 (PMP3) family.

It localises to the membrane. The polypeptide is UPF0057 membrane protein At4g30660 (Arabidopsis thaliana (Mouse-ear cress)).